Consider the following 393-residue polypeptide: Dual specificity mitogen-activated protein kinase kinase 1 (393 aa).

The disordered stretch occupies residues 1-27 (MPKKKPTPIQLNPAPDGSAVNGTSSAE). The Protein kinase domain occupies 68-361 (FEKISELGAG…LKQLMVHAFI (294 aa)). ATP-binding positions include 74-82 (LGAGNGGVV) and K97. D190 serves as the catalytic Proton acceptor. Residues S218 and S222 each carry the phosphoserine; by RAF modification. Residues 270–307 (ELELMFGCQVEGDAAETPPRPRTPGRPLSSYGMDSRPP) form an RAF1-binding region. At T286 the chain carries Phosphothreonine. T292 is modified (phosphothreonine; by MAPK1). Phosphoserine; by PAK is present on S298.

This sequence belongs to the protein kinase superfamily. STE Ser/Thr protein kinase family. MAP kinase kinase subfamily. In terms of assembly, found in a complex with at least BRAF, HRAS, MAP2K1, MAPK3/ERK1 and RGS14. Forms a heterodimer with MAP2K2/MEK2. Forms heterodimers with KSR2 which further dimerize to form tetramers. Interacts with KSR1 or KSR2 and BRAF; the interaction with KSR1 or KSR2 mediates KSR1-BRAF or KSR2-BRAF dimerization. Interacts with ARBB2, LAMTOR3, MAPK1/ERK2 and RAF1. Interacts with MAPK1/ERK2. Interacts with MORG1. Interacts with PPARG. Interacts with SGK1. Interacts with BIRC6/bruce. Interacts with KAT7; the interaction promotes KAT7 phosphorylation. Interacts with RAF1 and NEK10; the interaction is required for ERK1/2-signaling pathway activation in response to UV irradiation. Interacts with TRAF3IP3. Interacts with MOS. Phosphorylation at Ser-218 and Ser-222 by MAP kinase kinase kinases (RAF or MEKK1) positively regulates the kinase activity. Also phosphorylated at Thr-292 by MAPK1/ERK2 and at Ser-298 by PAK. MAPK1/ERK2 phosphorylation of Thr-292 occurs in response to cellular adhesion and leads to inhibition of Ser-298 phosphorylation by PAK. Autophosphorylated at Ser-218 and Ser-222, autophosphosphorylation is promoted by NEK10 following UV irradiation.

The protein localises to the cytoplasm. Its subcellular location is the cytoskeleton. It localises to the microtubule organizing center. It is found in the centrosome. The protein resides in the spindle pole body. The protein localises to the nucleus. Its subcellular location is the membrane. The catalysed reaction is L-seryl-[protein] + ATP = O-phospho-L-seryl-[protein] + ADP + H(+). It catalyses the reaction L-threonyl-[protein] + ATP = O-phospho-L-threonyl-[protein] + ADP + H(+). It carries out the reaction L-tyrosyl-[protein] + ATP = O-phospho-L-tyrosyl-[protein] + ADP + H(+). Ras proteins such as HRAS mediate the activation of RAF proteins such as RAF1 or BRAF which in turn activate extracellular signal-regulated kinases (ERK) through MAPK (mitogen-activated protein kinases) and ERK kinases MAP2K1/MEK1 and MAP2K2/MEK2. Activation occurs through phosphorylation of Ser-218 and Ser-222. MAP2K1/MEK1 binds KSR1 or KSR2 releasing the inhibitory intramolecular interaction between KSR1 or KSR2 protein kinase and N-terminal domains. This allows KSR1 or KSR2 dimerization with BRAF leading to BRAF activation and phosphorylation of MAP2K1. MAP2K1/MEK1 is also the target of negative feed-back regulation by its substrate kinases, such as MAPK1/ERK2. These phosphorylate MAP2K1/MEK1 on Thr-292, thereby facilitating dephosphorylation of the activating residues Ser-218 and Ser-222. Inhibited by serine/threonine phosphatase 2A. Its function is as follows. Dual specificity protein kinase which acts as an essential component of the MAP kinase signal transduction pathway. Binding of extracellular ligands such as growth factors, cytokines and hormones to their cell-surface receptors activates RAS and this initiates RAF1 activation. RAF1 then further activates the dual-specificity protein kinases MAP2K1/MEK1 and MAP2K2/MEK2. Both MAP2K1/MEK1 and MAP2K2/MEK2 function specifically in the MAPK/ERK cascade, and catalyze the concomitant phosphorylation of a threonine and a tyrosine residue in a Thr-Glu-Tyr sequence located in the extracellular signal-regulated kinases MAPK3/ERK1 and MAPK1/ERK2, leading to their activation and further transduction of the signal within the MAPK/ERK cascade. Activates BRAF in a KSR1 or KSR2-dependent manner; by binding to KSR1 or KSR2 releases the inhibitory intramolecular interaction between KSR1 or KSR2 protein kinase and N-terminal domains which promotes KSR1 or KSR2-BRAF dimerization and BRAF activation. Depending on the cellular context, this pathway mediates diverse biological functions such as cell growth, adhesion, survival and differentiation, predominantly through the regulation of transcription, metabolism and cytoskeletal rearrangements. One target of the MAPK/ERK cascade is peroxisome proliferator-activated receptor gamma (PPARG), a nuclear receptor that promotes differentiation and apoptosis. MAP2K1/MEK1 has been shown to export PPARG from the nucleus. The MAPK/ERK cascade is also involved in the regulation of endosomal dynamics, including lysosome processing and endosome cycling through the perinuclear recycling compartment (PNRC), as well as in the fragmentation of the Golgi apparatus during mitosis. This is Dual specificity mitogen-activated protein kinase kinase 1 (MAP2K1) from Oryctolagus cuniculus (Rabbit).